We begin with the raw amino-acid sequence, 232 residues long: 7-cyano-7-deazaguanine synthase (232 aa).

8-18 serves as a coordination point for ATP; sequence FSGGQDSTTCL. Residues Cys187, Cys196, Cys199, and Cys202 each contribute to the Zn(2+) site.

Belongs to the QueC family. Zn(2+) is required as a cofactor.

The catalysed reaction is 7-carboxy-7-deazaguanine + NH4(+) + ATP = 7-cyano-7-deazaguanine + ADP + phosphate + H2O + H(+). It participates in purine metabolism; 7-cyano-7-deazaguanine biosynthesis. Its function is as follows. Catalyzes the ATP-dependent conversion of 7-carboxy-7-deazaguanine (CDG) to 7-cyano-7-deazaguanine (preQ(0)). The sequence is that of 7-cyano-7-deazaguanine synthase from Shewanella denitrificans (strain OS217 / ATCC BAA-1090 / DSM 15013).